Consider the following 405-residue polypeptide: Endo-1,4-beta-xylanase 5 (405 aa).

Residues 1–22 form the signal peptide; the sequence is MTRLATLITLAGLLAVSPGAYA. N-linked (GlcNAc...) asparagine glycans are attached at residues Asn27 and Asn69. Residues 32–352 form the GH10 domain; that stretch reads STGAEGLNSL…KPAYTSVSSL (321 aa). Glu166 functions as the Proton donor in the catalytic mechanism. The N-linked (GlcNAc...) asparagine glycan is linked to Asn171. Catalysis depends on Glu273, which acts as the Nucleophile. A disulfide bridge links Cys302 with Cys308. Gly380 carries GPI-anchor amidated glycine lipidation. Residues 381 to 405 constitute a propeptide, removed in mature form; the sequence is AGRETVSIAGLTLALSSLAFGMFML.

This sequence belongs to the glycosyl hydrolase 10 (cellulase F) family.

The protein localises to the cell membrane. It localises to the secreted. It catalyses the reaction Endohydrolysis of (1-&gt;4)-beta-D-xylosidic linkages in xylans.. The protein operates within glycan degradation; xylan degradation. Functionally, endo-1,4-beta-xylanase involved in the hydrolysis of xylan, a major structural heterogeneous polysaccharide found in plant biomass representing the second most abundant polysaccharide in the biosphere, after cellulose. This chain is Endo-1,4-beta-xylanase 5 (XYL5), found in Pyricularia grisea (Crabgrass-specific blast fungus).